Here is a 217-residue protein sequence, read N- to C-terminus: Deoxyribose-phosphate aldolase (217 aa).

Residue Asp95 is the Proton donor/acceptor of the active site. Lys156 serves as the catalytic Schiff-base intermediate with acetaldehyde. Residue Lys184 is the Proton donor/acceptor of the active site.

It belongs to the DeoC/FbaB aldolase family. DeoC type 1 subfamily.

The protein resides in the cytoplasm. It carries out the reaction 2-deoxy-D-ribose 5-phosphate = D-glyceraldehyde 3-phosphate + acetaldehyde. Its pathway is carbohydrate degradation; 2-deoxy-D-ribose 1-phosphate degradation; D-glyceraldehyde 3-phosphate and acetaldehyde from 2-deoxy-alpha-D-ribose 1-phosphate: step 2/2. Its function is as follows. Catalyzes a reversible aldol reaction between acetaldehyde and D-glyceraldehyde 3-phosphate to generate 2-deoxy-D-ribose 5-phosphate. The polypeptide is Deoxyribose-phosphate aldolase (Thermosynechococcus vestitus (strain NIES-2133 / IAM M-273 / BP-1)).